Consider the following 453-residue polypeptide: Alpha-glucosidase (453 aa).

3-69 contributes to the NAD(+) binding site; that stretch reads TKIVLVGAGS…LPFIVSATTD (67 aa). A substrate-binding site is contributed by N149. C171 contacts Mn(2+). Residue H172 is the Proton donor of the active site. Mn(2+) is bound at residue H201.

Homotetramer. Requires Mn(2+) as cofactor. Co(2+) serves as cofactor. Ca(2+) is required as a cofactor. The cofactor is Fe(2+). It depends on Mg(2+) as a cofactor. Requires Sr(2+) as cofactor. Ni(2+) serves as cofactor. NAD(+) is required as a cofactor.

The catalysed reaction is Hydrolysis of terminal, non-reducing (1-&gt;4)-linked alpha-D-glucose residues with release of alpha-D-glucose.. The protein operates within glycan degradation; palatinose degradation. Its activity is regulated as follows. Is inhibited by EDTA in vitro. Its function is as follows. Alpha-glucosidase with broad specificity. Hydrolyzes maltose, palatinose, maltulose, trehalose, trehalulose, turanose, leucrose, sucrose and maltitol. Is not active against alpha-galactosides, e.g. melibiose, and alpha-mannosides. Shows an obligate requirement for an O-alpha-glycosidic linkage, since it is not able to cleave beta-glycosidic bonds (cellobiose, gentiobiose, lactose, sophorose or laminaribiose). Cannot hydrolyze phosphorylated alpha-glucosides derivatives. Seems to be involved in the degradation of palatinose, a sucrose isomer that is formed as a reserve material under conditions of excess carbon availability, sequestered in a form unavailable to competitors such as fungi or the host plant, and whose consumption appears to be postponed until the preferentially metabolized carbon source (e.g. sucrose) is depleted. The chain is Alpha-glucosidase (palH) from Erwinia rhapontici (Pectobacterium rhapontici).